A 207-amino-acid chain; its full sequence is Antitermination protein Q (207 aa).

Residues 1 to 28 are disordered; sequence MRLESVAKFHSPKSPMMSDSPRATASDS. Zn(2+) is bound by residues Cys-118, Cys-121, Cys-144, and Cys-147. A zinc finger lies at 118 to 147; the sequence is CRNCHGTGRAVDIAKTEQWGRVVEKECGRC. Residues 171 to 192 mediate DNA binding; that stretch reads LTQPTWSRTVKPLYDALVVQCH.

It belongs to the phage antitermination Q type 2 family. Interacts with host RPOB (via flap domain); this interaction renders host RNAP resistant to transcription pausing and allows it to read through termination signals. Interacts with host RNA polymerase sigma factor RPOD (via domain-4). Interacts with host NusA (via N-terminus and AR2 domain); this interaction releases the autoinhibition of NusA.

In terms of biological role, mediates the switch from middle to viral late gene expression by associating with host RNA polymerase (RNAP) so that the latter can read without pausing and through transcription terminators preceding late genes. Competes with host factor sigma 70 for binding to RPOB, the beta-subunit of host RNAP. To join the elongation complex, binds a specific DNA Q-binding element (QBE) and interacts with RNAP that is paused during early elongation. Participates in the lysis-lysogeny decision by activating the expression of the late lytic genes. This is Antitermination protein Q (23) from Salmonella typhimurium.